Consider the following 220-residue polypeptide: uncharacterized protein (220 aa).

Residues 194–220 (DQSQQQATKSNSKTKKLKGNHGEKTKI) form a disordered region. Residues 195 to 204 (QSQQQATKSN) show a composition bias toward polar residues.

This is an uncharacterized protein from Borreliella burgdorferi (strain ATCC 35210 / DSM 4680 / CIP 102532 / B31) (Borrelia burgdorferi).